The following is a 154-amino-acid chain: Aspartate carbamoyltransferase regulatory chain (154 aa).

Zn(2+) contacts are provided by Cys-109, Cys-114, Cys-138, and Cys-141.

The protein belongs to the PyrI family. In terms of assembly, contains catalytic and regulatory chains. It depends on Zn(2+) as a cofactor.

Involved in allosteric regulation of aspartate carbamoyltransferase. The sequence is that of Aspartate carbamoyltransferase regulatory chain from Serratia proteamaculans (strain 568).